The following is a 487-amino-acid chain: Aspartyl/glutamyl-tRNA(Asn/Gln) amidotransferase subunit B (487 aa).

Belongs to the GatB/GatE family. GatB subfamily. As to quaternary structure, heterotrimer of A, B and C subunits.

It catalyses the reaction L-glutamyl-tRNA(Gln) + L-glutamine + ATP + H2O = L-glutaminyl-tRNA(Gln) + L-glutamate + ADP + phosphate + H(+). It carries out the reaction L-aspartyl-tRNA(Asn) + L-glutamine + ATP + H2O = L-asparaginyl-tRNA(Asn) + L-glutamate + ADP + phosphate + 2 H(+). Allows the formation of correctly charged Asn-tRNA(Asn) or Gln-tRNA(Gln) through the transamidation of misacylated Asp-tRNA(Asn) or Glu-tRNA(Gln) in organisms which lack either or both of asparaginyl-tRNA or glutaminyl-tRNA synthetases. The reaction takes place in the presence of glutamine and ATP through an activated phospho-Asp-tRNA(Asn) or phospho-Glu-tRNA(Gln). The polypeptide is Aspartyl/glutamyl-tRNA(Asn/Gln) amidotransferase subunit B (Leptospira biflexa serovar Patoc (strain Patoc 1 / Ames)).